The chain runs to 450 residues: Phosphoglucosamine mutase (450 aa).

Serine 101 functions as the Phosphoserine intermediate in the catalytic mechanism. 4 residues coordinate Mg(2+): serine 101, aspartate 242, aspartate 244, and aspartate 246. Serine 101 bears the Phosphoserine mark.

Belongs to the phosphohexose mutase family. Mg(2+) serves as cofactor. In terms of processing, activated by phosphorylation.

It catalyses the reaction alpha-D-glucosamine 1-phosphate = D-glucosamine 6-phosphate. Catalyzes the conversion of glucosamine-6-phosphate to glucosamine-1-phosphate. The protein is Phosphoglucosamine mutase of Rhodopseudomonas palustris (strain ATCC BAA-98 / CGA009).